Here is a 76-residue protein sequence, read N- to C-terminus: Ovarian cancer-related protein 1 (76 aa).

The protein is Ovarian cancer-related protein 1 (OCR1) of Homo sapiens (Human).